A 221-amino-acid chain; its full sequence is Sugar transporter SWEET1 (221 aa).

The next 7 helical transmembrane spans lie at 3 to 23 (AGGVADSFLSSACVLFTLGMF), 43 to 63 (QFLPFLTTDVNNLSWLSYGVL), 68 to 88 (TLIIVNSVGAVLQTLYILAYL), 102 to 122 (ATLLAVLLLGYGYFWLLVPDL), 129 to 149 (LGLFCSVFTISMYLSPLADLA), 160 to 180 (LSFSLTIATLFCSASWSIYGF), and 186 to 206 (YITVPNLPGILTSLIRLGLFC). One can recognise a MtN3/slv 1 domain in the interval 10–94 (FLSSACVLFT…LAYLHYSPQK (85 aa)). The 86-residue stretch at 127–212 (QQLGLFCSVF…GLFCKYPPEQ (86 aa)) folds into the MtN3/slv 2 domain. The tract at residues 149-221 (AKIVQTKSTQ…QDRKYRLLQT (73 aa)) is mediates interaction with TRPV2.

Belongs to the SWEET sugar transporter family. As to quaternary structure, interacts with TRPV2; the interaction probably occurs intracellularly and depends on TRPV2 N-glycosylation. As to expression, expressed at high levels in lung, placenta, spleen and thymus, at intermediate levels in brain, heart, kidney and testis, and at low levels in bone marrow, liver and lymph node. Within the thymus expression is highest in non-lymphoid cells.

It is found in the golgi apparatus membrane. It localises to the cell membrane. Mediates sugar transport across membranes. May regulate the expression of RAG1 a gene involved in V(D)J recombination. In Mus musculus (Mouse), this protein is Sugar transporter SWEET1 (Slc50a1).